Consider the following 201-residue polypeptide: Small ribosomal subunit protein uS4c (201 aa).

The disordered stretch occupies residues 17-44 (ALPGLTNKKPRTGSDLRNQSRSGKKSQY). In terms of domain architecture, S4 RNA-binding spans 89 to 149 (MRLDNILFRL…DEQKSRALIQ (61 aa)).

This sequence belongs to the universal ribosomal protein uS4 family. As to quaternary structure, part of the 30S ribosomal subunit. Contacts protein S5. The interaction surface between S4 and S5 is involved in control of translational fidelity.

It is found in the plastid. The protein resides in the chloroplast. In terms of biological role, one of the primary rRNA binding proteins, it binds directly to 16S rRNA where it nucleates assembly of the body of the 30S subunit. With S5 and S12 plays an important role in translational accuracy. This chain is Small ribosomal subunit protein uS4c (rps4), found in Solanum bulbocastanum (Wild potato).